We begin with the raw amino-acid sequence, 143 residues long: Nucleoside diphosphate kinase (143 aa).

ATP is bound by residues Lys-11, Phe-59, Arg-87, Thr-93, Arg-104, and Asn-114. The Pros-phosphohistidine intermediate role is filled by His-117.

Belongs to the NDK family. In terms of assembly, homotetramer. Requires Mg(2+) as cofactor.

The protein resides in the cytoplasm. It carries out the reaction a 2'-deoxyribonucleoside 5'-diphosphate + ATP = a 2'-deoxyribonucleoside 5'-triphosphate + ADP. The enzyme catalyses a ribonucleoside 5'-diphosphate + ATP = a ribonucleoside 5'-triphosphate + ADP. Major role in the synthesis of nucleoside triphosphates other than ATP. The ATP gamma phosphate is transferred to the NDP beta phosphate via a ping-pong mechanism, using a phosphorylated active-site intermediate. The sequence is that of Nucleoside diphosphate kinase from Escherichia coli O7:K1 (strain IAI39 / ExPEC).